The primary structure comprises 128 residues: Large-conductance mechanosensitive channel (128 aa).

2 helical membrane passes run 11 to 31 and 70 to 90; these read FALKGNVLDLAVAVVIGAAFG and GAFIQSIVDFVIIAFAIFIFV.

This sequence belongs to the MscL family. As to quaternary structure, homopentamer.

It localises to the cell membrane. Its function is as follows. Channel that opens in response to stretch forces in the membrane lipid bilayer. May participate in the regulation of osmotic pressure changes within the cell. The sequence is that of Large-conductance mechanosensitive channel from Listeria innocua serovar 6a (strain ATCC BAA-680 / CLIP 11262).